The primary structure comprises 122 residues: Large ribosomal subunit protein uL14 (122 aa).

This sequence belongs to the universal ribosomal protein uL14 family. Part of the 50S ribosomal subunit. Forms a cluster with proteins L3 and L19. In the 70S ribosome, L14 and L19 interact and together make contacts with the 16S rRNA in bridges B5 and B8.

Binds to 23S rRNA. Forms part of two intersubunit bridges in the 70S ribosome. The polypeptide is Large ribosomal subunit protein uL14 (Polaromonas naphthalenivorans (strain CJ2)).